We begin with the raw amino-acid sequence, 91 residues long: Probable Fe(2+)-trafficking protein (91 aa).

It belongs to the Fe(2+)-trafficking protein family. Monomer.

Could be a mediator in iron transactions between iron acquisition and iron-requiring processes, such as synthesis and/or repair of Fe-S clusters in biosynthetic enzymes. In Citrobacter koseri (strain ATCC BAA-895 / CDC 4225-83 / SGSC4696), this protein is Probable Fe(2+)-trafficking protein.